The following is a 410-amino-acid chain: LL-diaminopimelate aminotransferase (410 aa).

Positions 15 and 42 each coordinate substrate. Pyridoxal 5'-phosphate-binding positions include Tyr-72, 108-109 (AK), Tyr-132, Asn-188, Tyr-219, and 247-249 (SFS). Substrate-binding residues include Lys-109, Tyr-132, and Asn-188. Lys-250 is subject to N6-(pyridoxal phosphate)lysine. 2 residues coordinate pyridoxal 5'-phosphate: Arg-258 and Asn-293. The substrate site is built by Asn-293 and Arg-389.

It belongs to the class-I pyridoxal-phosphate-dependent aminotransferase family. LL-diaminopimelate aminotransferase subfamily. As to quaternary structure, homodimer. Pyridoxal 5'-phosphate serves as cofactor.

The enzyme catalyses (2S,6S)-2,6-diaminopimelate + 2-oxoglutarate = (S)-2,3,4,5-tetrahydrodipicolinate + L-glutamate + H2O + H(+). The protein operates within amino-acid biosynthesis; L-lysine biosynthesis via DAP pathway; LL-2,6-diaminopimelate from (S)-tetrahydrodipicolinate (aminotransferase route): step 1/1. In terms of biological role, involved in the synthesis of meso-diaminopimelate (m-DAP or DL-DAP), required for both lysine and peptidoglycan biosynthesis. Catalyzes the direct conversion of tetrahydrodipicolinate to LL-diaminopimelate. Can also use m-DAP instead of LL-DAP as the amino-group donor. The protein is LL-diaminopimelate aminotransferase of Bacteroides fragilis (strain ATCC 25285 / DSM 2151 / CCUG 4856 / JCM 11019 / LMG 10263 / NCTC 9343 / Onslow / VPI 2553 / EN-2).